Consider the following 113-residue polypeptide: Tachykinin-4 (113 aa).

Positions 1-20 are cleaved as a signal peptide; it reads MLPCLALLLLMELSVCTVAG. Residue Met67 is modified to Methionine amide. Positions 71-79 are excised as a propeptide; that stretch reads VGGRPLIQP. Leu95 carries the leucine amide modification. A propeptide spanning residues 98–113 is cleaved from the precursor; sequence RSLFTEGREDEAQGSE.

The protein belongs to the tachykinin family. As to expression, expressed at low levels in the uterus of both pregnant and non-pregnant women. Isoform 1 is found only in the adrenal gland and fetal liver. Isoform 2 is found in heart, liver, bone marrow, prostate, adrenal gland and testis. Isoform 3 and isoform 4 are expressed predominantly in adrenal gland and placenta.

The protein resides in the secreted. Its function is as follows. Tachykinins are active peptides which excite neurons, evoke behavioral responses, are potent vasodilators and secretagogues, and contract (directly or indirectly) many smooth muscles. Endokinin-A induces thermal hyperalgesia and pain-related behavior such as scratching following intrathecal administration in rats. These effects are suppressed by treatment with endokinin-C. Endokinin-A/B reduces arterial blood pressure and increases sperm motility. The sequence is that of Tachykinin-4 from Homo sapiens (Human).